The sequence spans 725 residues: Ribosomal RNA large subunit methyltransferase K/L (725 aa).

A THUMP domain is found at valine 46–leucine 157.

This sequence belongs to the methyltransferase superfamily. RlmKL family.

The protein resides in the cytoplasm. It carries out the reaction guanosine(2445) in 23S rRNA + S-adenosyl-L-methionine = N(2)-methylguanosine(2445) in 23S rRNA + S-adenosyl-L-homocysteine + H(+). The enzyme catalyses guanosine(2069) in 23S rRNA + S-adenosyl-L-methionine = N(2)-methylguanosine(2069) in 23S rRNA + S-adenosyl-L-homocysteine + H(+). Its function is as follows. Specifically methylates the guanine in position 2445 (m2G2445) and the guanine in position 2069 (m7G2069) of 23S rRNA. The polypeptide is Ribosomal RNA large subunit methyltransferase K/L (Pseudomonas aeruginosa (strain ATCC 15692 / DSM 22644 / CIP 104116 / JCM 14847 / LMG 12228 / 1C / PRS 101 / PAO1)).